Consider the following 100-residue polypeptide: Aspartyl/glutamyl-tRNA(Asn/Gln) amidotransferase subunit C (100 aa).

This sequence belongs to the GatC family. As to quaternary structure, heterotrimer of A, B and C subunits.

The catalysed reaction is L-glutamyl-tRNA(Gln) + L-glutamine + ATP + H2O = L-glutaminyl-tRNA(Gln) + L-glutamate + ADP + phosphate + H(+). The enzyme catalyses L-aspartyl-tRNA(Asn) + L-glutamine + ATP + H2O = L-asparaginyl-tRNA(Asn) + L-glutamate + ADP + phosphate + 2 H(+). Allows the formation of correctly charged Asn-tRNA(Asn) or Gln-tRNA(Gln) through the transamidation of misacylated Asp-tRNA(Asn) or Glu-tRNA(Gln) in organisms which lack either or both of asparaginyl-tRNA or glutaminyl-tRNA synthetases. The reaction takes place in the presence of glutamine and ATP through an activated phospho-Asp-tRNA(Asn) or phospho-Glu-tRNA(Gln). The polypeptide is Aspartyl/glutamyl-tRNA(Asn/Gln) amidotransferase subunit C (Rickettsia bellii (strain OSU 85-389)).